A 788-amino-acid chain; its full sequence is IQ motif and ubiquitin-like domain-containing protein (788 aa).

Residues 1–89 (MSDPEEERVA…SLGSASGSQD (89 aa)) are disordered. The segment covering 7–20 (ERVADSTAHYEEAG) has biased composition (basic and acidic residues). The span at 31–54 (EAEGSDVMPEQDDEVQELTTESEE) shows a compositional bias: acidic residues. Positions 68-78 (KSDDSKPREEV) are enriched in basic and acidic residues. The segment covering 80 to 89 (SLGSASGSQD) has biased composition (polar residues). A Ubiquitin-like domain is found at 127 to 203 (ATVKIVLIPA…VQVEVFSTLP (77 aa)). One can recognise an IQ domain in the interval 334 to 363 (RLHAVIVIQTSYRRWHAKRYVESLRKQKKL).

As to quaternary structure, component of the axonemal radial spoke 1 (RS1) complex, at least composed of spoke head proteins RSPH1, RSPH3B, RSPH9 and the cilia-specific component RSPH4A or sperm-specific component RSPH6A, spoke stalk proteins RSPH14, DNAJB13, DYDC1, ROPN1L and NME5, and the anchor protein IQUB. Does not appear to be part of radial spoke complexes 2 or 3 (RS2 or RS3). Interacts with CALM1. Interacts with DNAJB13. Interacts with DYNLL2. Interacts with NME5. Interacts with RSPH3. Interacts with RSPH9. Interacts with ZMYND10. Interacts with calmodulin; the interaction occurs in conditions of low but not high calcium. As to expression, expressed in the flagellum of sperm cells and cilia of tracheal epithelial cells (at protein level). High expression in testis, also present in brain and lung.

The protein resides in the cytoplasm. It is found in the cytoskeleton. The protein localises to the flagellum axoneme. It localises to the cell projection. Its subcellular location is the cilium. Its function is as follows. Anchors the radial spoke 1 (RS1) complex to the A microtubule of outer doublet microtubules in axonemes. The triple radial spokes (RS1, RS2 and RS3) are required to modulate beating of the sperm flagellum. May play a role in inhibiting signaling via MAPK1/ERK2 and MAPK3/ERK1. Additionally, may play a role in the functioning of cilia. Not required for the functioning of tracheal or ependymal cilia. This Mus musculus (Mouse) protein is IQ motif and ubiquitin-like domain-containing protein (Iqub).